The following is a 109-amino-acid chain: uncharacterized protein (109 aa).

The next 3 helical transmembrane spans lie at 16-36 (YIPL…YYGL), 54-74 (TVYF…LLCL), and 80-100 (FCSS…TLAM).

Its subcellular location is the membrane. This is an uncharacterized protein from Schizosaccharomyces pombe (strain 972 / ATCC 24843) (Fission yeast).